Consider the following 472-residue polypeptide: Collagenase 3 (472 aa).

The signal sequence occupies residues 1 to 19; it reads MHPGVLAAFLFLSWTRCWS. The propeptide at 20–104 is activation peptide; it reads LPVPNDDDDD…PRCGVPDVGE (85 aa). Positions 95–102 match the Cysteine switch motif; sequence PRCGVPDV. Cys97 contacts Zn(2+). N-linked (GlcNAc...) asparagine glycosylation occurs at Asn118. Residue Asp129 coordinates Ca(2+). N-linked (GlcNAc...) asparagine glycosylation is found at Asn153 and Asn159. Asp163 provides a ligand contact to Ca(2+). Positions 173 and 175 each coordinate Zn(2+). The interaction with TIMP2 stretch occupies residues 177-247; the sequence is YPFDGPSGLL…GALMFPIYTY (71 aa). Ca(2+) contacts are provided by Asp180, Gly181, Ser183, and Leu185. His188 contributes to the Zn(2+) binding site. Positions 195, 197, and 199 each coordinate Ca(2+). His201 is a binding site for Zn(2+). Ca(2+) is bound by residues Asp203, Asp204, and Glu206. Zn(2+) is bound at residue His223. Glu224 is an active-site residue. Zn(2+) contacts are provided by His227, His233, and Met241. The tract at residues 269 to 472 is interaction with collagen; sequence PGDEDPNPKH…VMPTNSLLWC (204 aa). Hemopexin repeat units follow at residues 282–331, 332–378, 380–428, and 429–472; these read PDKC…WPEL, PNRI…GFPK, VKKI…FPGI, and GDKV…LLWC. An intrachain disulfide couples Cys285 to Cys472. 4 residues coordinate Ca(2+): Asp292, Ile294, Asp336, and Ala338. Phosphotyrosine; by PKDCC is present on Tyr367. 4 residues coordinate Ca(2+): Ser384, Ala386, Asp433, and Val435.

Belongs to the peptidase M10A family. Requires Ca(2+) as cofactor. The cofactor is Zn(2+). The proenzyme is activated by removal of the propeptide; this cleavage can be effected by other matrix metalloproteinases, such as MMP2, MMP3 and MMP14 and may involve several cleavage steps. Cleavage can also be autocatalytic, after partial maturation by another protease or after treatment with 4-aminophenylmercuric acetate (APMA) (in vitro). In terms of processing, N-glycosylated. Post-translationally, tyrosine phosphorylated by PKDCC/VLK. As to expression, seems to be specific to breast carcinomas.

The protein resides in the secreted. The protein localises to the extracellular space. It is found in the extracellular matrix. Functionally, plays a role in the degradation of extracellular matrix proteins including fibrillar collagen, fibronectin, TNC and ACAN. Cleaves triple helical collagens, including type I, type II and type III collagen, but has the highest activity with soluble type II collagen. Can also degrade collagen type IV, type XIV and type X. May also function by activating or degrading key regulatory proteins, such as TGFB1 and CCN2. Plays a role in wound healing, tissue remodeling, cartilage degradation, bone development, bone mineralization and ossification. Required for normal embryonic bone development and ossification. Plays a role in the healing of bone fractures via endochondral ossification. Plays a role in wound healing, probably by a mechanism that involves proteolytic activation of TGFB1 and degradation of CCN2. Plays a role in keratinocyte migration during wound healing. May play a role in cell migration and in tumor cell invasion. The polypeptide is Collagenase 3 (MMP13) (Equus caballus (Horse)).